A 535-amino-acid polypeptide reads, in one-letter code: CTP synthase (535 aa).

The interval 1-267 is amidoligase domain; it reads MTKFIFVTGG…DDIVIQRLQL (267 aa). Serine 13 contributes to the CTP binding site. Serine 13 contributes to the UTP binding site. 14–19 contacts ATP; the sequence is SLGKGI. L-glutamine is bound at residue tyrosine 54. Aspartate 71 is an ATP binding site. Residues aspartate 71 and glutamate 141 each coordinate Mg(2+). CTP-binding positions include 148 to 150, 188 to 193, and lysine 224; these read DIE and KTKPTQ. UTP is bound by residues 188–193 and lysine 224; that span reads KTKPTQ. 240-242 serves as a coordination point for ATP; the sequence is RDA. Residues 293–535 enclose the Glutamine amidotransferase type-1 domain; it reads TIGLVGKYVS…VEAALNYQQK (243 aa). Residue glycine 355 coordinates L-glutamine. Cysteine 382 (nucleophile; for glutamine hydrolysis) is an active-site residue. L-glutamine is bound by residues 383–386, glutamate 406, and arginine 463; that span reads LGMQ. Active-site residues include histidine 508 and glutamate 510.

Belongs to the CTP synthase family. As to quaternary structure, homotetramer.

It catalyses the reaction UTP + L-glutamine + ATP + H2O = CTP + L-glutamate + ADP + phosphate + 2 H(+). The enzyme catalyses L-glutamine + H2O = L-glutamate + NH4(+). It carries out the reaction UTP + NH4(+) + ATP = CTP + ADP + phosphate + 2 H(+). It functions in the pathway pyrimidine metabolism; CTP biosynthesis via de novo pathway; CTP from UDP: step 2/2. Allosterically activated by GTP, when glutamine is the substrate; GTP has no effect on the reaction when ammonia is the substrate. The allosteric effector GTP functions by stabilizing the protein conformation that binds the tetrahedral intermediate(s) formed during glutamine hydrolysis. Inhibited by the product CTP, via allosteric rather than competitive inhibition. In terms of biological role, catalyzes the ATP-dependent amination of UTP to CTP with either L-glutamine or ammonia as the source of nitrogen. Regulates intracellular CTP levels through interactions with the four ribonucleotide triphosphates. The sequence is that of CTP synthase from Staphylococcus epidermidis (strain ATCC 35984 / DSM 28319 / BCRC 17069 / CCUG 31568 / BM 3577 / RP62A).